A 1158-amino-acid polypeptide reads, in one-letter code: Transient receptor potential cation channel subfamily M member 5 (1158 aa).

Residues 1-729 (MQTTQSSCPG…LTRWRKFWGA (729 aa)) are Cytoplasmic-facing. S129 carries the post-translational modification Phosphoserine; by PKC. 4 residues coordinate Ca(2+): C341, D350, D353, and E354. Residues 488 to 507 (GRRMEERGPPKRPAGQKWLP) are disordered. Residues 552–572 (KIIKEMSHLEKEAEVARTMRE) adopt a coiled-coil conformation. The chain crosses the membrane as a helical span at residues 730 to 754 (PVTVFLGNVVMYFAFLFLFTYVLLV). Over 755–764 (DFRPPPQGPS) the chain is Extracellular. Residues 765–784 (GSEVTLYFWVFTLVLEEIRQ) form a helical membrane-spanning segment. Residues E781 and Q784 each contribute to the Ca(2+) site. The Cytoplasmic portion of the chain corresponds to 785-805 (GFFTDEDTHLVKKFTLYVEDN). The chain crosses the membrane as a helical span at residues 806–824 (WNKCDMVAIFLFIVGVTCR). N807 and D810 together coordinate Ca(2+). Over 825 to 831 (MVPSVFE) the chain is Extracellular. The chain crosses the membrane as a helical span at residues 832–854 (AGRTVLAIDFMVFTLRLIHIFAI). At 855–863 (HKQLGPKII) the chain is on the cytoplasmic side. The helical transmembrane segment at 864–893 (IVERMMKDVFFFLFFLSVWLVAYGVTTQAL) threads the bilayer. Residues 894–902 (LHPHDGRLE) are Extracellular-facing. The segment at residues 903–938 (WIFRRVLYRPYLQIFGQIPLDEIDEARVNCSLHPLL) is an intramembrane region (pore-forming). The Selectivity filter signature appears at 917 to 919 (FGQ). Topologically, residues 939-950 (LESSASCPNLYA) are extracellular. A helical membrane pass occupies residues 951 to 985 (NWLVILLLVTFLLVTNVLLMNLLIAMFSYTFQVVQ). The Cytoplasmic portion of the chain corresponds to 986 to 1158 (GNADMFWKFQ…LESGLPPSDT (173 aa)). E1002 is a Ca(2+) binding site. Over residues 1127-1141 (TYSSSQNCGCRSQPA) the composition is skewed to polar residues. Positions 1127–1158 (TYSSSQNCGCRSQPASARDREYLESGLPPSDT) are disordered.

This sequence belongs to the transient receptor (TC 1.A.4) family. LTrpC subfamily. TRPM5 sub-subfamily. As to quaternary structure, homotetramer. Multiple phosphorylation sites regulate the Gq/ TRPM5 modulation axis, with the Ser-129 playing a substantial role in this positive modulation. In terms of tissue distribution, strongly expressed in liver, heart, testis, brain and kidney. Detected in fetal liver, kidney, spleen, brain, heart and lung, and in adult skin, eyes, spleen, stomach, small intestine, colon, lung, bladder, pancreas and thymus. Biallelically expressed at all stages and tissues examined. Also expressed in subsets of taste receptor cells of the tongue, in olfactory sensory neurons of the main olfactory epithelium and in the vomeronasal organ.

It localises to the cell membrane. The enzyme catalyses Na(+)(in) = Na(+)(out). It catalyses the reaction K(+)(in) = K(+)(out). Ca(2+)-activated cation channel. Displays voltage dependence modulation. Regulated by PI(4,5)P2 levels. PI(4,5)P 2 reverses the Ca(2+) -induced desensitization of channels. Inhibited by flufenamic acid with an IC(50) of 24.5 uM and spermine with an IC(50) of 37 uM. Is a highly temperature-sensitive, heat activated channel showing a steep increase of inward currents at temperatures between 15 and 35 degrees Celsius. Heat activation is due to a shift of the voltage-dependent activation curve to negative potentials. The channel is blocked by extracellular acidification. In terms of biological role, monovalent cation-selective ion channel activated by intracellular Ca(2+) in a voltage- and temperature-dependent manner. Mediates the transport of Na(+), K(+) and Cs(+) ions equally well. Activated directly by increase in intracellular Ca(2+), but is impermeable to it. The activation mechanism of TRPM5 involves a multistep process. TRPM5 activation involves ligand binding (i.e., tastant molecule, glucose stimulation) to Gq/G-protein coupled receptors (GPCR) and leads to the breakdown of phosphatidylinositol bisphosphate (PIP2) into diacylglycerol (DAG) and inositol trisphosphate (IP3), IP3 binds to its receptors in the endoplasmic reticulum and cause Ca(2+) release. Simultaneously with the intracellular Ca(2+) release, DAG activates the protein kinase C (PKC), which phosphorylates the TRPM5 channel. This phosphorylation combined with the bound Ca(2+), leads to a robust inward current allowing the entry of sodium ions (Na+) into the cell. This ion influx depolarizes the cell membrane, generating action potentials that propagate TRPM5 signals. Is a key player in sensing sweet, umami and bitter stimuli. May also be involved in sensing semiochemicals. Involved in insulin secretion by pancreatic beta cells. This is Transient receptor potential cation channel subfamily M member 5 from Mus musculus (Mouse).